The following is an 845-amino-acid chain: Tyrosine-protein phosphatase corkscrew (845 aa).

SH2 domains lie at 6–101 (WFHP…KQPL) and 111–205 (WFHG…RQPF). Residues 227–645 (FWEEFESLQQ…KFVYYAVQHY (419 aa)) enclose the Tyrosine-protein phosphatase domain. Residues 289 to 444 (IRLPTDGDLY…REREREMFKT (156 aa)) form a PTPase insert (Cys/Ser-rich) region. Residues 362 to 402 (SKHKRSESSASSSPSSGSGSGPGSSGTSGVSSVNGPGTPTN) form a disordered region. Composition is skewed to low complexity over residues 369-378 (SSASSSPSSG) and 388-400 (TSGV…PGTP). Ser-419 carries the phosphoserine modification. Substrate contacts are provided by residues Asp-545, 583-589 (CSAGIGR), and Gln-630. Cys-583 acts as the Phosphocysteine intermediate in catalysis. A disordered region spans residues 793–824 (DSLKQQQQREEQAPAGAGKMQQPAPPLRPRPG).

It belongs to the protein-tyrosine phosphatase family. Non-receptor class subfamily. In terms of assembly, interacts with drpr isoform A. As to expression, expressed uniformly throughout all tissues during embryogenesis.

It localises to the cytoplasm. It catalyses the reaction O-phospho-L-tyrosyl-[protein] + H2O = L-tyrosyl-[protein] + phosphate. Its function is as follows. Required in all receptor tyrosine kinase signaling pathways. Functions downstream of the receptor tyrosine kinase torso, acting in concert with D-Raf via tailless. Also functions downstream of Egfr (epidermal growth factor receptor) and btl (fibroblast growth factor receptor). The SH2 domain suggests that csw effects its role by mediating heteromeric protein interactions. Maternally required for normal determination of cell fates at the termini of the embryo. Required for cell fate specification of the ventral ectoderm, in the developing embryonic CNS and for embryonic tracheal cell migration. Functions during imaginal development for proper formation of adult structures such as eyes, aristae, L5 wing vein and the tarsal claw. Dephosphorylates drpr isoform A which is required for the inhibition by drpr isoform A of glial cell engulfment of axonal debris produced following axonal injury. This chain is Tyrosine-protein phosphatase corkscrew (csw), found in Drosophila melanogaster (Fruit fly).